Consider the following 282-residue polypeptide: Large ribosomal subunit protein uL2 (282 aa).

Disordered stretches follow at residues 31–56 (EKSLLDSQSHSAGRNNAGKMTVRHRG) and 226–282 (SVMN…GSKM). The segment covering 35–44 (LDSQSHSAGR) has biased composition (polar residues). The span at 257–266 (TVGKKTRSKK) shows a compositional bias: basic residues.

It belongs to the universal ribosomal protein uL2 family. As to quaternary structure, part of the 50S ribosomal subunit. Forms a bridge to the 30S subunit in the 70S ribosome.

One of the primary rRNA binding proteins. Required for association of the 30S and 50S subunits to form the 70S ribosome, for tRNA binding and peptide bond formation. It has been suggested to have peptidyltransferase activity; this is somewhat controversial. Makes several contacts with the 16S rRNA in the 70S ribosome. The polypeptide is Large ribosomal subunit protein uL2 (Levilactobacillus brevis (strain ATCC 367 / BCRC 12310 / CIP 105137 / JCM 1170 / LMG 11437 / NCIMB 947 / NCTC 947) (Lactobacillus brevis)).